The sequence spans 2514 residues: Probable polyketide synthase 8/35 (2514 aa).

The Ketosynthase family 3 (KS3) domain occupies Asp11 to Glu442. Residues Cys181, His323, and His362 each act as for beta-ketoacyl synthase activity in the active site. The acyl/malonyl transferase stretch occupies residues Gly635 to Tyr668. Ser645 serves as the catalytic For acyl/malonyl transferase activity. Residues Ile925–Asn1047 form an N-terminal hotdog fold region. One can recognise a PKS/mFAS DH domain in the interval Ile925 to Ser1209. The active-site Proton acceptor; for dehydratase activity is His959. Residues Asn1064 to Ser1209 form a C-terminal hotdog fold region. Asp1122 functions as the Proton donor; for dehydratase activity in the catalytic mechanism. Residues Ile2431–Leu2508 form the Carrier domain. At Ser2468 the chain carries O-(pantetheine 4'-phosphoryl)serine.

It depends on pantetheine 4'-phosphate as a cofactor.

Probable polyketide synthase. This is Probable polyketide synthase 8/35 (pks8) from Dictyostelium discoideum (Social amoeba).